The following is a 243-amino-acid chain: tRNA (guanine-N(1)-)-methyltransferase (243 aa).

Residues Gly-111 and 131-136 each bind S-adenosyl-L-methionine; that span reads IGDYVL.

The protein belongs to the RNA methyltransferase TrmD family. In terms of assembly, homodimer.

The protein localises to the cytoplasm. The enzyme catalyses guanosine(37) in tRNA + S-adenosyl-L-methionine = N(1)-methylguanosine(37) in tRNA + S-adenosyl-L-homocysteine + H(+). Specifically methylates guanosine-37 in various tRNAs. The sequence is that of tRNA (guanine-N(1)-)-methyltransferase from Brevibacillus brevis (strain 47 / JCM 6285 / NBRC 100599).